We begin with the raw amino-acid sequence, 268 residues long: Indole-3-glycerol phosphate synthase (268 aa).

This sequence belongs to the TrpC family.

The enzyme catalyses 1-(2-carboxyphenylamino)-1-deoxy-D-ribulose 5-phosphate + H(+) = (1S,2R)-1-C-(indol-3-yl)glycerol 3-phosphate + CO2 + H2O. The protein operates within amino-acid biosynthesis; L-tryptophan biosynthesis; L-tryptophan from chorismate: step 4/5. The sequence is that of Indole-3-glycerol phosphate synthase from Acinetobacter baumannii (strain SDF).